Consider the following 1723-residue polypeptide: Lys-gingipain HG66 (1723 aa).

The first 24 residues, Met1–Ile24, serve as a signal peptide directing secretion. The propeptide occupies Lys25–Arg228. Ca(2+) contacts are provided by Asp313, Asp337, Asp339, Phe341, and Glu343. Residue His444 is the Proton donor of the active site. Cys477 acts as the Nucleophile in catalysis. Positions 482 and 491 each coordinate Ca(2+). Residues Asp965 to Ser985 are disordered. Ser987, Glu989, Asp1000, Asp1002, Asp1004, His1006, Ser1021, Gly1023, Asn1042, Asp1145, and Glu1146 together coordinate Ca(2+).

This sequence belongs to the peptidase C25 family. Proteolytically cleaved into a catalytic subunit and three adhesins. Arg-gingipain is involved in this post-translational processing.

It is found in the secreted. It carries out the reaction Endopeptidase with strict specificity for lysyl bonds.. Functionally, cysteine proteinase with a strong preference for substrates with Lys in the P1 position. Hydrolyzes bovine hemoglobin, bovine serum albumin, casein, human placental type I collagen and human IgA and IgG. Disrupts the functions of polymorphonuclear leukocytes. May act as a virulence factor in the development of peridontal disease. Involved in the coaggregation of P.gingivalis with other oral bacteria. The chain is Lys-gingipain HG66 from Porphyromonas gingivalis (Bacteroides gingivalis).